We begin with the raw amino-acid sequence, 676 residues long: Methionine--tRNA ligase (676 aa).

The 'HIGH' region motif lies at 15 to 25 (PYANGPIHLGH). Residues C146, C149, C159, and C162 each coordinate Zn(2+). The 'KMSKS' region motif lies at 332–336 (KMSKS). K335 lines the ATP pocket. Positions 575-676 (DFAKIDLRIA…EGAQPGMRVK (102 aa)) constitute a tRNA-binding domain.

It belongs to the class-I aminoacyl-tRNA synthetase family. MetG type 1 subfamily. As to quaternary structure, homodimer. Zn(2+) serves as cofactor.

The protein resides in the cytoplasm. It catalyses the reaction tRNA(Met) + L-methionine + ATP = L-methionyl-tRNA(Met) + AMP + diphosphate. In terms of biological role, is required not only for elongation of protein synthesis but also for the initiation of all mRNA translation through initiator tRNA(fMet) aminoacylation. The protein is Methionine--tRNA ligase of Shewanella sp. (strain MR-7).